The sequence spans 443 residues: Ribosomal protein uS12 methylthiotransferase RimO (443 aa).

An MTTase N-terminal domain is found at 1 to 114 (MGFVSLGCPK…VMQAVHTHLP (114 aa)). Cys8, Cys44, Cys73, Cys145, Cys149, and Cys152 together coordinate [4Fe-4S] cluster. Positions 131–372 (LTPKHYAYLK…MEVAEEVSAR (242 aa)) constitute a Radical SAM core domain. Positions 375–443 (QRKVGQTLRV…ADGHDLWGAV (69 aa)) constitute a TRAM domain.

Belongs to the methylthiotransferase family. RimO subfamily. It depends on [4Fe-4S] cluster as a cofactor.

The protein localises to the cytoplasm. The catalysed reaction is L-aspartate(89)-[ribosomal protein uS12]-hydrogen + (sulfur carrier)-SH + AH2 + 2 S-adenosyl-L-methionine = 3-methylsulfanyl-L-aspartate(89)-[ribosomal protein uS12]-hydrogen + (sulfur carrier)-H + 5'-deoxyadenosine + L-methionine + A + S-adenosyl-L-homocysteine + 2 H(+). In terms of biological role, catalyzes the methylthiolation of an aspartic acid residue of ribosomal protein uS12. The protein is Ribosomal protein uS12 methylthiotransferase RimO of Cupriavidus necator (strain ATCC 17699 / DSM 428 / KCTC 22496 / NCIMB 10442 / H16 / Stanier 337) (Ralstonia eutropha).